We begin with the raw amino-acid sequence, 927 residues long: Isoleucine--tRNA ligase (927 aa).

Residues 57–67 (PFANGNIHMGH) carry the 'HIGH' region motif. Residue Glu-553 participates in L-isoleucyl-5'-AMP binding. Residues 594 to 598 (KMSKS) carry the 'KMSKS' region motif. Residue Lys-597 participates in ATP binding. Residues Cys-886, Cys-889, Cys-906, and Cys-909 each coordinate Zn(2+).

It belongs to the class-I aminoacyl-tRNA synthetase family. IleS type 1 subfamily. In terms of assembly, monomer. It depends on Zn(2+) as a cofactor.

The protein resides in the cytoplasm. It carries out the reaction tRNA(Ile) + L-isoleucine + ATP = L-isoleucyl-tRNA(Ile) + AMP + diphosphate. Catalyzes the attachment of isoleucine to tRNA(Ile). As IleRS can inadvertently accommodate and process structurally similar amino acids such as valine, to avoid such errors it has two additional distinct tRNA(Ile)-dependent editing activities. One activity is designated as 'pretransfer' editing and involves the hydrolysis of activated Val-AMP. The other activity is designated 'posttransfer' editing and involves deacylation of mischarged Val-tRNA(Ile). This chain is Isoleucine--tRNA ligase, found in Lactobacillus helveticus (strain DPC 4571).